A 197-amino-acid polypeptide reads, in one-letter code: Probable GTP-binding protein EngB (197 aa).

The 173-residue stretch at 25–197 folds into the EngB-type G domain; the sequence is SAPEIAFAGR…VRDEFFKFTR (173 aa). GTP contacts are provided by residues 33-40, 60-64, 79-82, 146-149, and 177-179; these read GRSNVGKS, GCTRQ, DLPG, TKID, and ISI. Mg(2+)-binding residues include Ser-40 and Thr-62.

It belongs to the TRAFAC class TrmE-Era-EngA-EngB-Septin-like GTPase superfamily. EngB GTPase family. The cofactor is Mg(2+).

In terms of biological role, necessary for normal cell division and for the maintenance of normal septation. The protein is Probable GTP-binding protein EngB of Wolbachia pipientis subsp. Culex pipiens (strain wPip).